A 156-amino-acid chain; its full sequence is MPRRRVAAKREVLDDPKYGSQILAKFMNHVMESGKKAVAERIVYGALEKVKERKNSDPLEIFEKALDAIAPLVEVKSRRVGGATYQVPVEVRPSRRNALAMRWLVDFARKRGEKSMALRLAGELMDAAEGKGAAVKKREDVHRMAEANKAFSHYRF.

Belongs to the universal ribosomal protein uS7 family. Part of the 30S ribosomal subunit. Contacts proteins S9 and S11.

Its function is as follows. One of the primary rRNA binding proteins, it binds directly to 16S rRNA where it nucleates assembly of the head domain of the 30S subunit. Is located at the subunit interface close to the decoding center, probably blocks exit of the E-site tRNA. The polypeptide is Small ribosomal subunit protein uS7 (Pseudomonas syringae pv. tomato (strain ATCC BAA-871 / DC3000)).